The primary structure comprises 340 residues: UDP-3-O-(3-hydroxymyristoyl)glucosamine N-acyltransferase (340 aa).

His-239 (proton acceptor) is an active-site residue.

This sequence belongs to the transferase hexapeptide repeat family. LpxD subfamily. Homotrimer.

It carries out the reaction a UDP-3-O-[(3R)-3-hydroxyacyl]-alpha-D-glucosamine + a (3R)-hydroxyacyl-[ACP] = a UDP-2-N,3-O-bis[(3R)-3-hydroxyacyl]-alpha-D-glucosamine + holo-[ACP] + H(+). It catalyses the reaction UDP-3-O-[(3R)-3-hydroxytetradecanoyl]-alpha-D-glucosamine + (3R)-hydroxytetradecanoyl-[ACP] = UDP-2-N,3-O-bis[(3R)-3-hydroxytetradecanoyl]-alpha-D-glucosamine + holo-[ACP] + H(+). The protein operates within glycolipid biosynthesis; lipid IV(A) biosynthesis; lipid IV(A) from (3R)-3-hydroxytetradecanoyl-[acyl-carrier-protein] and UDP-N-acetyl-alpha-D-glucosamine: step 3/6. Its function is as follows. Catalyzes the N-acylation of UDP-3-O-(hydroxytetradecanoyl)glucosamine using 3-hydroxytetradecanoyl-ACP as the acyl donor. Is involved in the biosynthesis of lipid A, a phosphorylated glycolipid that anchors the lipopolysaccharide to the outer membrane of the cell. This is UDP-3-O-(3-hydroxymyristoyl)glucosamine N-acyltransferase from Wigglesworthia glossinidia brevipalpis.